We begin with the raw amino-acid sequence, 250 residues long: Tryptophan synthase alpha chain (250 aa).

Residues Glu-31 and Asp-42 each act as proton acceptor in the active site.

The protein belongs to the TrpA family. In terms of assembly, tetramer of two alpha and two beta chains.

It catalyses the reaction (1S,2R)-1-C-(indol-3-yl)glycerol 3-phosphate + L-serine = D-glyceraldehyde 3-phosphate + L-tryptophan + H2O. The protein operates within amino-acid biosynthesis; L-tryptophan biosynthesis; L-tryptophan from chorismate: step 5/5. Its function is as follows. The alpha subunit is responsible for the aldol cleavage of indoleglycerol phosphate to indole and glyceraldehyde 3-phosphate. The chain is Tryptophan synthase alpha chain from Staphylococcus carnosus (strain TM300).